A 90-amino-acid polypeptide reads, in one-letter code: UPF0367 protein PMT9312_0127 (90 aa).

It belongs to the UPF0367 family.

The protein is UPF0367 protein PMT9312_0127 of Prochlorococcus marinus (strain MIT 9312).